The sequence spans 319 residues: L-lactate dehydrogenase (319 aa).

Residues 10–11 (RV), Asp32, Arg37, Tyr62, and 76–77 (GV) contribute to the NAD(+) site. Residues Gln79, Arg85, and 117-120 (NPVD) each bind substrate. Residues 115 to 117 (VTN) and Ser140 contribute to the NAD(+) site. 145 to 148 (DTAR) provides a ligand contact to substrate. Arg150 and His165 together coordinate beta-D-fructose 1,6-bisphosphate. His172 functions as the Proton acceptor in the catalytic mechanism. Tyr217 is modified (phosphotyrosine). Thr226 contributes to the substrate binding site.

The protein belongs to the LDH/MDH superfamily. LDH family. Homotetramer.

Its subcellular location is the cytoplasm. It catalyses the reaction (S)-lactate + NAD(+) = pyruvate + NADH + H(+). Its pathway is fermentation; pyruvate fermentation to lactate; (S)-lactate from pyruvate: step 1/1. Allosterically activated by fructose 1,6-bisphosphate (FBP). Inactivated by Mn(2+), Co(2+), Cd(2+) and Zn(2+). In terms of biological role, catalyzes the conversion of lactate to pyruvate. It is stereospecific for L(+)-lactate. The sequence is that of L-lactate dehydrogenase from Thermotoga maritima (strain ATCC 43589 / DSM 3109 / JCM 10099 / NBRC 100826 / MSB8).